The following is a 327-amino-acid chain: Microtubule-associated protein RP/EB family member 2 (327 aa).

The interval 1-21 is disordered; it reads MPGPTQTLSPNGENNNDIIQD. Serine 9 carries the phosphoserine modification. The 103-residue stretch at 57–159 folds into the Calponin-homology (CH) domain; it reads TMSRHDIIAW…FIQWFKKFYD (103 aa). Tyrosine 167 bears the Phosphotyrosine mark. Disordered regions lie at residues 171–240 and 299–327; these read EARQ…DKDL and ASEE…QEEY. Residues 187–327 are DCTN1-binding; sequence QIFNLPKKSH…EQQPPQQEEY (141 aa). A compositionally biased stretch (low complexity) spans 200-234; the sequence is SPTAGAAKSSPAAKPGSTPSRPSSAKRASSSGSAS. Serine 219 is modified (phosphoserine). The EB1 C-terminal domain maps to 236–306; that stretch reads SDKDLETQVI…LYASEEHEGH (71 aa). The APC-binding stretch occupies residues 259-302; that stretch reads EGVEKERDFYFGKLREIELLCQEHGQENDDLVQRLMDVLYASEE. A compositionally biased stretch (basic and acidic residues) spans 300-317; the sequence is SEEHEGHTEEPEAEEQAH. Over residues 318–327 the composition is skewed to low complexity; sequence EQQPPQQEEY.

It belongs to the MAPRE family. In terms of assembly, interacts with DCTN1. Interacts with APC (via C-terminal). Interacts with monomeric and polymerized tubulin. Interacts with SLAIN1. Interacts (via the N-terminal region) with BAG1.

Its subcellular location is the cytoplasm. It is found in the cytoskeleton. In terms of biological role, may be involved in microtubule polymerization, and spindle function by stabilizing microtubules and anchoring them at centrosomes. May play a role in cell migration. This chain is Microtubule-associated protein RP/EB family member 2 (MAPRE2), found in Pongo abelii (Sumatran orangutan).